Consider the following 77-residue polypeptide: Translation initiation factor IF-1, chloroplastic (77 aa).

Residues 1–71 (MKEQKWIHEG…TRGRIIYRLR (71 aa)) enclose the S1-like domain.

Belongs to the IF-1 family. Component of the 30S ribosomal translation pre-initiation complex which assembles on the 30S ribosome in the order IF-2 and IF-3, IF-1 and N-formylmethionyl-tRNA(fMet); mRNA recruitment can occur at any time during PIC assembly.

The protein resides in the plastid. Its subcellular location is the chloroplast. One of the essential components for the initiation of protein synthesis. Stabilizes the binding of IF-2 and IF-3 on the 30S subunit to which N-formylmethionyl-tRNA(fMet) subsequently binds. Helps modulate mRNA selection, yielding the 30S pre-initiation complex (PIC). Upon addition of the 50S ribosomal subunit IF-1, IF-2 and IF-3 are released leaving the mature 70S translation initiation complex. This is Translation initiation factor IF-1, chloroplastic from Brexia madagascariensis.